The primary structure comprises 230 residues: Urease accessory protein UreE (230 aa).

Residues 197 to 230 (LHIHAIHSHGDGDSHNHDHDHSHSHGDHDHDHKH) form a disordered region. Positions 204–230 (SHGDGDSHNHDHDHSHSHGDHDHDHKH) are enriched in basic and acidic residues.

The protein belongs to the UreE family.

It is found in the cytoplasm. Involved in urease metallocenter assembly. Binds nickel. Probably functions as a nickel donor during metallocenter assembly. This is Urease accessory protein UreE from Yersinia aldovae.